The chain runs to 325 residues: Ferrochelatase (325 aa).

Fe cation is bound by residues histidine 195 and glutamate 276.

This sequence belongs to the ferrochelatase family.

The protein localises to the cytoplasm. It carries out the reaction heme b + 2 H(+) = protoporphyrin IX + Fe(2+). Its pathway is porphyrin-containing compound metabolism; protoheme biosynthesis; protoheme from protoporphyrin-IX: step 1/1. In terms of biological role, catalyzes the ferrous insertion into protoporphyrin IX. The polypeptide is Ferrochelatase (Methylococcus capsulatus (strain ATCC 33009 / NCIMB 11132 / Bath)).